The following is a 377-amino-acid chain: NADH dehydrogenase [ubiquinone] 1 alpha subcomplex subunit 9, mitochondrial (377 aa).

A mitochondrion-targeting transit peptide spans 1–35 (MAAAVRFRVVRALPMSRPAITAAATSVFCGSSHRQ). The residue at position 175 (lysine 175) is an N6-succinyllysine. An N6-acetyllysine mark is found at lysine 189 and lysine 370.

It belongs to the complex I NDUFA9 subunit family. As to quaternary structure, complex I is composed of 45 different subunits. This a component of the hydrophobic protein fraction. Interacts with BLOC1S1. Interacts with SLC2A4. Interacts with CLOCK. Interacts with RAB5IF. It depends on FAD as a cofactor. Post-translationally, acetylated on lysine residues. BLOC1S1 is required for acetylation. Acetylated by CLOCK in a circadian manner.

It is found in the mitochondrion matrix. Functionally, accessory subunit of the mitochondrial membrane respiratory chain NADH dehydrogenase (Complex I), that is believed not to be involved in catalysis. Complex I functions in the transfer of electrons from NADH to the respiratory chain. The immediate electron acceptor for the enzyme is believed to be ubiquinone. In Mus musculus (Mouse), this protein is NADH dehydrogenase [ubiquinone] 1 alpha subcomplex subunit 9, mitochondrial (Ndufa9).